A 1018-amino-acid polypeptide reads, in one-letter code: Calcium-transporting ATPase sarcoplasmic/endoplasmic reticulum type (1018 aa).

Topologically, residues 1-48 are cytoplasmic; that stretch reads MEDGHSKTVDEVLSHFRVDPERGLSLDQVKEYQKKYGPNELPAEEGKT. A helical transmembrane segment spans residues 49-69; that stretch reads LWQLVLEQFDDLLVKILLLAA. Over 70–88 the chain is Lumenal; the sequence is IISFVLALFEEHEGVEAFV. Residues 89 to 109 traverse the membrane as a helical segment; the sequence is EPFVILLILIANAVVGVWQER. Over 110–252 the chain is Cytoplasmic; it reads NAESAIEALK…EIKTPLQQKL (143 aa). Residues 253 to 272 form a helical membrane-spanning segment; it reads DEFGEQLSKVISLICVAVWA. Residues 273-294 lie on the Lumenal side of the membrane; the sequence is INIGHFNDPAHGGSWIKGAVYY. A helical membrane pass occupies residues 295–312; the sequence is FKIAVALAVAAIPEGLPA. Positions 303, 304, 306, and 308 each coordinate Ca(2+). The Cytoplasmic portion of the chain corresponds to 313-756; that stretch reads VITTCLALGT…EEGRAIYNNM (444 aa). Asp-350 (4-aspartylphosphate intermediate) is an active-site residue. Residues Asp-702 and Asp-706 each coordinate Mg(2+). The helical transmembrane segment at 757 to 776 threads the bilayer; the sequence is KQFIRYLISSNIGEVVSIFL. The Ca(2+) site is built by Asn-767 and Glu-770. The Lumenal segment spans residues 777 to 786; the sequence is TAALGLPEAL. Residues 787 to 807 form a helical membrane-spanning segment; the sequence is IPVQLLWVNLVTDGLPATALG. Residues Asn-795, Thr-798, and Asp-799 each coordinate Ca(2+). Residues 808–827 lie on the Cytoplasmic side of the membrane; sequence FNPPDLDIMTKPPRKADEGL. Residues 828–850 traverse the membrane as a helical segment; sequence ISGWLFFRYMAIGGYVGCATVGG. Topologically, residues 851 to 896 are lumenal; the sequence is AAWWFMFSETGPQLSYWQLTHHLSCLGGGEEFKGIDCKIFNDPHPM. The chain crosses the membrane as a helical span at residues 897 to 916; the sequence is TMALSVLVTIEMLNAMNSLS. Glu-907 contacts Ca(2+). The Cytoplasmic segment spans residues 917 to 929; it reads ENQSLVQMPPWCN. The helical transmembrane segment at 930–948 threads the bilayer; it reads IWLIASMCLSFALHFVILY. The Lumenal segment spans residues 949–963; the sequence is VDVLSTVFQVTPLDG. The helical transmembrane segment at 964 to 984 threads the bilayer; sequence NEWMTVMKFSLPVVLLDEILK. The Cytoplasmic segment spans residues 985-1018; that stretch reads FVARRISDGESYIKNMHGLVLAWAVFFAYIIWGP.

This sequence belongs to the cation transport ATPase (P-type) (TC 3.A.3) family.

It localises to the endoplasmic reticulum membrane. The protein localises to the sarcoplasmic reticulum membrane. It carries out the reaction Ca(2+)(in) + ATP + H2O = Ca(2+)(out) + ADP + phosphate + H(+). In terms of biological role, this magnesium-dependent enzyme catalyzes the hydrolysis of ATP coupled with the transport of calcium. The chain is Calcium-transporting ATPase sarcoplasmic/endoplasmic reticulum type from Anopheles gambiae (African malaria mosquito).